A 1577-amino-acid chain; its full sequence is MADRGVDLAALPKEVREQLAELELELSEGDITQKGYEKKRAKLLAPFVPQTQNVDVSILSTDSTSSPITIPIAAPRQHRAHRSGGTRDDRYRSDIHTEAVQAALARHKEEKMALPMPTKRRSAFVQSPAENCTPPDTSSASEDEGSLRRRQAAISAMLAQNLQSPEYWINRSVQGSSTSSSASSTLSHGDGKTHNHNNHSQGQTSALADVLAHTRIDTNSSSGSVPPDVTSTAPQDRNSRVDLPANIAVKGISRGQSRSSMMDTAGGVPAHSRVSTKIQQLLNTLKRPKRPPLSEFFLDDSEEIVEVPQPDPNTPRPEGRQIIPVKGEPLGVVSNWPPALQAALARWGATQAKSPALTALDITGKPLYTLTYGKLWSRSLKLAYTLLNKLGTKNEPVLKPGDRVALVYPNSDPGMFWVAFYGCLLAEVIPVPIEVPLSRKDAGSQQIGFLLGSCGVGLALTSEVCLKGLPKTPNGEIMQFKGWPRLKWVVTDTKYLTKPSKDWQPHIPTANTDTAYIEYKASKEGTVMGVAVSKISMLTHCQALTQACNYCEGETLVNVLDFKKDSGLWHGVLTSVMNRIHTISVPYAVMKACPLSWVQRVHVHKARVALVKCRDLHWAMMAHRDQKDTNLSSLRMLIVADGANPWSVSSCDAFLNVFQSHGLKPEMICPCASSPEAMTVAIRRPGAPGTPLPARAILSMAGLSHGVIRVNTEDKNSALTVQDVGHVMPGALMCIVKPDGPPMLCKTDEIGEIVLNSRAGGTMYYGLPGVTKNTFEVIPVNSGGTPIGDVPFTRTGLLGFVGPGSLVFVVGKIEGLLSVSGRRHNADDLVATALAVEPVKTVYRGRIAVFSVTVFYDERVVIVAEQRPDANEEDSFQWMSRVLQAIDSIHQVGLYCLALVPANTLPKTPLGGIHVSETKHHFLEGSLHPCNILMCPHTCVTNLPKPRQKQPVGVGPASIMVGNLVAGKRIAQASGRDLGLIDDQEQSRKHQFLSEALQWRAQTDPDHVLYMLLNAKGVAVSTATCSQLHKRAEKITAALLERGGINTGDNVVLLYPPGIDLIASFYGCLYAGCIPVTVRPPHPQNLSATLPTVRMIIDVSKAACILTTQTLMKTLRSKEAAASVNVKTWPNIIDTDDLPRKRPASIYKPPTAEMLAYLDFSVSTTGMLTGVKMSHSAVNALCRSIKLQCELYSSRQIAICMDPYCGLGFVLWCLSSVYSGHQSILIPPMELETSLPLWLSTLSQYKIRDTFCSYSVMELCTKGLGTQTEALKARNVNLSCVRSCVVIAEERPRLALTQSFSKLFKDLGLSPRAVSTAFGSRVNLAICLQGTAGPDPSTVYVDMKSLRHDRVRLVERGAPQSLPLMESGTMLPGVRVIIVNPETKGPLGDSHLGEIWVNSPHNASGYYTIYGEESLQADHFNTRLSFGDTETLWARTGYLGFVKRTELLDASGDRHDALFVVGSLDETLELRGLRYHPIDIETSVSRAHRSIAESAVFTWTNLLVVVVELSGSEQEALDLVPLVTNVVLKEHHLIVGVVVIVDPGVIPINSRGEKQRMHLRDSFLADQLDPIYVAYNM.

The 118-residue stretch at 7 to 124 folds into the DMAP1-binding domain; it reads DLAALPKEVR…PMPTKRRSAF (118 aa). Disordered regions lie at residues 109 to 148, 173 to 204, 217 to 239, and 253 to 273; these read EEKM…GSLR, VQGS…QGQT, DTNS…DRNS, and SRGQ…AHSR. The segment covering 124–140 has biased composition (polar residues); it reads FVQSPAENCTPPDTSSA. The span at 176 to 187 shows a compositional bias: low complexity; sequence SSTSSSASSTLS. Positions 217–236 are enriched in polar residues; sequence DTNSSSGSVPPDVTSTAPQD.

It belongs to the DIP2 family.

It localises to the cell projection. The protein localises to the dendrite. It is found in the axon. Its subcellular location is the perikaryon. In terms of biological role, negatively regulates axonal outgrowth and is essential for normal synaptic transmission. Not required for regulation of axon polarity. Promotes acetylation of alpha-tubulin. The chain is Disco-interacting protein 2 homolog B-A (dip2ba) from Danio rerio (Zebrafish).